We begin with the raw amino-acid sequence, 257 residues long: MHLKAFGKVNLYLDVISRRKDNYHNILTLFQSINEHDDIFIEFSESEIFESEPPLNISWDNNIIKKSIETFKKETGFDNFNLKIKLIKNLPMGGGLGGGSADAAAVLNFLSKNFKISEKDLFEISCKIGSDVPFLLKGGTAIGKGKGEILEFLEPLKLNIQIYPMNYNIDTKKMYEKLDQNWKSINHFGDPYNLYEALKNNDIITAKQNAFNVFEQVAFKEYPKLKQKKEDMEKDEGIIFALMSGSGSTLYKVIYAN.

Lys-8 is an active-site residue. Residue 91 to 101 participates in ATP binding; the sequence is PMGGGLGGGSA. Asp-131 is a catalytic residue.

The protein belongs to the GHMP kinase family. IspE subfamily.

It catalyses the reaction 4-CDP-2-C-methyl-D-erythritol + ATP = 4-CDP-2-C-methyl-D-erythritol 2-phosphate + ADP + H(+). It participates in isoprenoid biosynthesis; isopentenyl diphosphate biosynthesis via DXP pathway; isopentenyl diphosphate from 1-deoxy-D-xylulose 5-phosphate: step 3/6. Its function is as follows. Catalyzes the phosphorylation of the position 2 hydroxy group of 4-diphosphocytidyl-2C-methyl-D-erythritol. The polypeptide is 4-diphosphocytidyl-2-C-methyl-D-erythritol kinase (Petrotoga mobilis (strain DSM 10674 / SJ95)).